Reading from the N-terminus, the 236-residue chain is Dual specificity protein phosphatase 15 (236 aa).

Residue G2 is the site of N-myristoyl glycine attachment. The region spanning 4–144 is the Tyrosine-protein phosphatase domain; sequence GMTKVLPGLY…LEEFGWANSQ (141 aa). The active-site Phosphocysteine intermediate is C88. The segment at 178-213 is disordered; sequence GPGTSAPSATTASSAASEGTLQRLVPRSPRESHRPL. Residues 181–194 show a composition bias toward low complexity; it reads TSAPSATTASSAAS.

The protein belongs to the protein-tyrosine phosphatase family. Non-receptor class dual specificity subfamily.

It is found in the cell membrane. It carries out the reaction O-phospho-L-tyrosyl-[protein] + H2O = L-tyrosyl-[protein] + phosphate. The enzyme catalyses O-phospho-L-seryl-[protein] + H2O = L-seryl-[protein] + phosphate. It catalyses the reaction O-phospho-L-threonyl-[protein] + H2O = L-threonyl-[protein] + phosphate. Functionally, may play a role in the regulation of oligodendrocyte differentiation. May play a role in the regulation of myelin formation. Involved in the regulation of Erk1/2 phosphorylation in Schwann cells; the signaling may be linked to the regulation of myelination. May dephosphorylate MAPK13, ATF2, ERBB3, PDGFRB and SNX6. The protein is Dual specificity protein phosphatase 15 (Dusp15) of Rattus norvegicus (Rat).